Consider the following 327-residue polypeptide: Carboxylesterase 20 (327 aa).

The short motif at 87–89 (HGG) is the Involved in the stabilization of the negatively charged intermediate by the formation of the oxyanion hole element. The Nucleophile role is filled by Ser-166. Catalysis depends on residues Asp-272 and His-302.

Belongs to the 'GDXG' lipolytic enzyme family. As to expression, expressed in roots, stems, flowers and siliques.

It catalyses the reaction a carboxylic ester + H2O = an alcohol + a carboxylate + H(+). Its activity is regulated as follows. Esterase activity measured in vitro with the synthetic substrate p-nitrophenyl acetate (pNPA) is inhibited by strigolactone. Functionally, carboxylesterase that possesses esterase activity in vitro with the synthetic substrate p-nitrophenyl acetate (pNPA). Binds strigolactones, but is not able to hydrolyze them. May be involved in the regulation of shoot branching. In Arabidopsis thaliana (Mouse-ear cress), this protein is Carboxylesterase 20.